A 1001-amino-acid chain; its full sequence is Sarcoplasmic/endoplasmic reticulum calcium ATPase 1 (1001 aa).

Topologically, residues methionine 1–serine 48 are cytoplasmic. The chain crosses the membrane as a helical span at residues leucine 49–alanine 69. The Lumenal portion of the chain corresponds to cysteine 70–valine 89. The helical transmembrane segment at glutamate 90 to arginine 110 threads the bilayer. Residues asparagine 111–leucine 253 are Cytoplasmic-facing. A helical membrane pass occupies residues aspartate 254–leucine 273. At isoleucine 274–tyrosine 295 the chain is on the lumenal side. Residues phenylalanine 296–alanine 313 traverse the membrane as a helical segment. The Ca(2+) site is built by valine 304, alanine 305, isoleucine 307, and glutamate 309. Over valine 314–methionine 757 the chain is Cytoplasmic. Aspartate 351 acts as the 4-aspartylphosphate intermediate in catalysis. The Mg(2+) site is built by aspartate 351 and threonine 353. Threonine 353 is an ATP binding site. Threonine 441 is subject to Phosphothreonine. Residues glutamate 442, arginine 489, lysine 515, and arginine 560 each coordinate ATP. Residue threonine 569 is modified to Phosphothreonine. A Phosphoserine modification is found at serine 581. ATP is bound by residues threonine 625, glycine 626, aspartate 627, arginine 678, and lysine 684. Aspartate 703 contacts Mg(2+). Position 706 (asparagine 706) interacts with ATP. A helical transmembrane segment spans residues lysine 758 to leucine 777. Asparagine 768 and glutamate 771 together coordinate Ca(2+). The Lumenal portion of the chain corresponds to threonine 778–leucine 787. A helical transmembrane segment spans residues isoleucine 788–glycine 808. The interval isoleucine 788 to glycine 808 is interaction with PLN. Ca(2+)-binding residues include asparagine 796, threonine 799, and aspartate 800. Residues phenylalanine 809–leucine 828 lie on the Cytoplasmic side of the membrane. Residues isoleucine 829 to alanine 851 traverse the membrane as a helical segment. At alanine 852–methionine 897 the chain is on the lumenal side. Cysteine 876 and cysteine 888 are oxidised to a cystine. The helical transmembrane segment at threonine 898–serine 917 threads the bilayer. Residue glutamate 908 coordinates Ca(2+). The Cytoplasmic portion of the chain corresponds to glutamate 918–asparagine 930. Residues isoleucine 931–tyrosine 949 form a helical membrane-spanning segment. Residues tryptophan 932 to leucine 943 are interaction with PLN. Residues valine 950 to leucine 964 lie on the Lumenal side of the membrane. The helical transmembrane segment at threonine 965–lysine 985 threads the bilayer. Topologically, residues phenylalanine 986–lysine 1001 are cytoplasmic.

Belongs to the cation transport ATPase (P-type) (TC 3.A.3) family. Type IIA subfamily. In terms of assembly, interacts with sarcolipin (SLN). Interacts with phospholamban (PLN). Interacts with myoregulin (MRLN). Interacts with DWORF. Interacts with VMP1. Mg(2+) is required as a cofactor. As to expression, skeletal muscle (at protein level). Skeletal muscle, fast twitch muscle (type II) fibers.

Its subcellular location is the endoplasmic reticulum membrane. The protein resides in the sarcoplasmic reticulum membrane. It catalyses the reaction Ca(2+)(in) + ATP + H2O = Ca(2+)(out) + ADP + phosphate + H(+). Inhibited by sarcolipin (SLN) and myoregulin (MRLN). Has also been shown to be reversibly inhibited by phospholamban (PLN) at low calcium concentrations in vitro. Dephosphorylated PLN decreases the apparent affinity of the ATPase for calcium and this inhibition is regulated by the phosphorylation of PLN in vitro. Enhanced by DWORF; DWORF increases activity by displacing sarcolipin (SLN), phospholamban (PLN) and myoregulin (MRLN). Its function is as follows. Key regulator of striated muscle performance by acting as the major Ca(2+) ATPase responsible for the reuptake of cytosolic Ca(2+) into the sarcoplasmic reticulum. Catalyzes the hydrolysis of ATP coupled with the translocation of calcium from the cytosol to the sarcoplasmic reticulum lumen. Contributes to calcium sequestration involved in muscular excitation/contraction. The sequence is that of Sarcoplasmic/endoplasmic reticulum calcium ATPase 1 (ATP2A1) from Oryctolagus cuniculus (Rabbit).